Reading from the N-terminus, the 192-residue chain is Orotate phosphoribosyltransferase (192 aa).

A 5-phospho-alpha-D-ribose 1-diphosphate-binding site is contributed by 116–124; sequence EDIVTTGLS. Orotate-binding residues include threonine 120 and arginine 148.

This sequence belongs to the purine/pyrimidine phosphoribosyltransferase family. PyrE subfamily. In terms of assembly, homodimer. Mg(2+) is required as a cofactor.

The enzyme catalyses orotidine 5'-phosphate + diphosphate = orotate + 5-phospho-alpha-D-ribose 1-diphosphate. Its pathway is pyrimidine metabolism; UMP biosynthesis via de novo pathway; UMP from orotate: step 1/2. Its function is as follows. Catalyzes the transfer of a ribosyl phosphate group from 5-phosphoribose 1-diphosphate to orotate, leading to the formation of orotidine monophosphate (OMP). This is Orotate phosphoribosyltransferase from Brucella canis (strain ATCC 23365 / NCTC 10854 / RM-666).